We begin with the raw amino-acid sequence, 434 residues long: DNA primase DnaG (434 aa).

A Toprim domain is found at 171–250 (DAIIIVEGRA…AFSPRRRSVE (80 aa)). Mg(2+) contacts are provided by Glu177, Asp219, and Asp221. A disordered region spans residues 290–319 (GEEEHSSVSQKEEGNNTTPDVPADLPEEPP). Basic and acidic residues predominate over residues 292-303 (EEHSSVSQKEEG).

This sequence belongs to the archaeal DnaG primase family. Forms a ternary complex with MCM helicase and DNA. Mg(2+) serves as cofactor.

The enzyme catalyses ssDNA + n NTP = ssDNA/pppN(pN)n-1 hybrid + (n-1) diphosphate.. In terms of biological role, RNA polymerase that catalyzes the synthesis of short RNA molecules used as primers for DNA polymerase during DNA replication. In Methanocorpusculum labreanum (strain ATCC 43576 / DSM 4855 / Z), this protein is DNA primase DnaG.